We begin with the raw amino-acid sequence, 440 residues long: Beta-1,3-galactosyl-O-glycosyl-glycoprotein beta-1,6-N-acetylglucosaminyltransferase (440 aa).

At 1–9 (MKMAGWKKK) the chain is on the cytoplasmic side. The chain crosses the membrane as a helical; Signal-anchor for type II membrane protein span at residues 10–30 (LCPGHHLWALGCYMLLAVVSL). Residues 31-440 (RLSLRFKCDV…RHKAIYGTEL (410 aa)) are Lumenal-facing. N-linked (GlcNAc...) asparagine; by host glycosylation is found at Asn-72 and Asn-108. Intrachain disulfides connect Cys-73–Cys-230, Cys-164–Cys-384, Cys-185–Cys-212, and Cys-393–Cys-425.

The protein belongs to the glycosyltransferase 14 family.

It is found in the host Golgi apparatus membrane. It catalyses the reaction a 3-O-[beta-D-galactosyl-(1-&gt;3)-N-acetyl-alpha-D-galactosaminyl]-L-seryl-[protein] + UDP-N-acetyl-alpha-D-glucosamine = 3-O-{beta-D-galactosyl-(1-&gt;3)-[N-acetyl-beta-D-glucosaminyl-(1-&gt;6)]-N-acetyl-alpha-D-galactosaminyl}-L-seryl-[protein] + UDP + H(+). The catalysed reaction is a 3-O-[beta-D-galactosyl-(1-&gt;3)-N-acetyl-alpha-D-galactosaminyl]-L-threonyl-[protein] + UDP-N-acetyl-alpha-D-glucosamine = a 3-O-{beta-D-galactosyl-(1-&gt;3)-[N-acetyl-beta-D-glucosaminyl-(1-&gt;6)]-N-acetyl-alpha-D-galactosaminyl}-L-threonyl-[protein] + UDP + H(+). It carries out the reaction a beta-D-Gal-(1-&gt;4)-beta-D-GlcNAc-(1-&gt;3)-beta-D-Gal-(1-&gt;4)-beta-D-GlcNAc derivative + UDP-N-acetyl-alpha-D-glucosamine = a beta-D-Gal-(1-&gt;4)-beta-D-GlcNAc-(1-&gt;3)-[beta-D-GlcNAc-(1-&gt;6)]-beta-D-Gal-(1-&gt;4)-N-acetyl-beta-D-glucosaminyl derivative + UDP + H(+). The enzyme catalyses 3-O-[N-acetyl-beta-D-glucosaminyl-(1-&gt;3)-N-acetyl-alpha-D-galactosaminyl]-L-seryl-[protein] + UDP-N-acetyl-alpha-D-glucosamine = 3-O-[N-acetyl-beta-D-glucosaminyl-(1-&gt;3)-[N-acetyl-beta-D-glucosaminyl-(1-&gt;6)]-N-acetyl-alpha-D-galactosaminyl]-L-seryl-[protein] + UDP + H(+). It catalyses the reaction a 3-O-[N-acetyl-beta-D-glucosaminyl-(1-&gt;3)-N-acetyl-alpha-D-galactosaminyl]-L-threonyl-[protein] + UDP-N-acetyl-alpha-D-glucosamine = 3-O-[N-acetyl-beta-D-glucosaminyl-(1-&gt;3)-[N-acetyl-beta-D-glucosaminyl-(1-&gt;6)]-N-acetyl-alpha-D-galactosaminyl]-L-threonyl-[protein] + UDP + H(+). It functions in the pathway protein modification; protein glycosylation. Functionally, non-essential glycosyltransferase that can synthesize all known mucin beta 6 N-acetylglucosaminides. Mediates core 2 and core 4 O-glycan branching, 2 important steps in mucin-type biosynthesis. Has also I-branching enzyme activity by converting linear into branched poly-N-acetyllactosaminoglycans. Contributes to the post-translational modifications of structural proteins. The protein is Beta-1,3-galactosyl-O-glycosyl-glycoprotein beta-1,6-N-acetylglucosaminyltransferase (Bo17) of Bovine herpesvirus 4 (strain LVR140) (BoHV-4).